The sequence spans 104 residues: Co-chaperonin GroES 2 (104 aa).

It belongs to the GroES chaperonin family. As to quaternary structure, heptamer of 7 subunits arranged in a ring. Interacts with the chaperonin GroEL.

The protein resides in the cytoplasm. Functionally, together with the chaperonin GroEL, plays an essential role in assisting protein folding. The GroEL-GroES system forms a nano-cage that allows encapsulation of the non-native substrate proteins and provides a physical environment optimized to promote and accelerate protein folding. GroES binds to the apical surface of the GroEL ring, thereby capping the opening of the GroEL channel. The protein is Co-chaperonin GroES 2 of Bradyrhizobium diazoefficiens (strain JCM 10833 / BCRC 13528 / IAM 13628 / NBRC 14792 / USDA 110).